Here is a 466-residue protein sequence, read N- to C-terminus: Asparagine--tRNA ligase (466 aa).

This sequence belongs to the class-II aminoacyl-tRNA synthetase family. As to quaternary structure, homodimer.

It localises to the cytoplasm. The enzyme catalyses tRNA(Asn) + L-asparagine + ATP = L-asparaginyl-tRNA(Asn) + AMP + diphosphate + H(+). The protein is Asparagine--tRNA ligase of Shewanella frigidimarina (strain NCIMB 400).